We begin with the raw amino-acid sequence, 479 residues long: Catalase A (479 aa).

Residues 1–21 (MSKILTTASGAPVADNQNSRS) show a composition bias toward polar residues. The disordered stretch occupies residues 1–25 (MSKILTTASGAPVADNQNSRSAGPR). Active-site residues include His53 and Asn126. Residue Tyr336 participates in heme binding. Residues 350 to 376 (QLPVNAPRCPVNSYQRDGSMATGSYGS) form a disordered region. The segment covering 361 to 376 (NSYQRDGSMATGSYGS) has biased composition (polar residues).

This sequence belongs to the catalase family. Requires heme as cofactor.

The enzyme catalyses 2 H2O2 = O2 + 2 H2O. Its activity is regulated as follows. Activated by peroxide. The major expressed catalase protein in strain Corvallis in stationary phase. Decomposes hydrogen peroxide into water and oxygen; serves to protect cells from the toxic effects of hydrogen peroxide. The polypeptide is Catalase A (katA) (Pseudomonas putida (Arthrobacter siderocapsulatus)).